Consider the following 306-residue polypeptide: Pantothenate kinase (306 aa).

Residue Gly-90–Ser-97 participates in ATP binding.

This sequence belongs to the prokaryotic pantothenate kinase family.

The protein localises to the cytoplasm. It carries out the reaction (R)-pantothenate + ATP = (R)-4'-phosphopantothenate + ADP + H(+). It participates in cofactor biosynthesis; coenzyme A biosynthesis; CoA from (R)-pantothenate: step 1/5. In Listeria welshimeri serovar 6b (strain ATCC 35897 / DSM 20650 / CCUG 15529 / CIP 8149 / NCTC 11857 / SLCC 5334 / V8), this protein is Pantothenate kinase.